A 284-amino-acid chain; its full sequence is Probable endonuclease 4 (284 aa).

The Zn(2+) site is built by His69, His109, Glu145, Asp179, His182, His216, Asp229, His231, and Glu261.

Belongs to the AP endonuclease 2 family. Zn(2+) is required as a cofactor.

It carries out the reaction Endonucleolytic cleavage to 5'-phosphooligonucleotide end-products.. In terms of biological role, endonuclease IV plays a role in DNA repair. It cleaves phosphodiester bonds at apurinic or apyrimidinic (AP) sites, generating a 3'-hydroxyl group and a 5'-terminal sugar phosphate. The chain is Probable endonuclease 4 from Chlorobium phaeobacteroides (strain BS1).